Here is a 282-residue protein sequence, read N- to C-terminus: Small ribosomal subunit protein uS3 (282 aa).

The KH type-2 domain occupies Ile-43 to Lys-111. Residues Ala-217–Ala-282 form a disordered region. Residues Arg-228–Ala-240 are compositionally biased toward basic and acidic residues. Residues Ala-256–Thr-269 are compositionally biased toward low complexity.

It belongs to the universal ribosomal protein uS3 family. As to quaternary structure, part of the 30S ribosomal subunit. Forms a tight complex with proteins S10 and S14.

In terms of biological role, binds the lower part of the 30S subunit head. Binds mRNA in the 70S ribosome, positioning it for translation. This Kineococcus radiotolerans (strain ATCC BAA-149 / DSM 14245 / SRS30216) protein is Small ribosomal subunit protein uS3.